Reading from the N-terminus, the 619-residue chain is P-granule-associated protein deps-1 (619 aa).

The segment at 62–101 is required for prg-1 binding; it reads NFDNIEEAKNLERRSKIPLKFGEVILWNESDCDHDKRIIL. Low complexity-rich tracts occupy residues 563-592 and 600-619; these read SRAT…AATS and GPSS…SSRV. The disordered stretch occupies residues 563–619; sequence SRATSARTTPAGSSIGSRSSIQSRASAATSVSSNRFVGPSSRRTPSGTPQSSTSSRV.

Interacts (via N-terminus) with prg-1; the interaction is direct. May interact with edg-1. Expressed in germ cells.

The protein localises to the cytoplasmic granule. It is found in the cytoplasm. It localises to the perinuclear region. Its function is as follows. Component of P-granules which is required for P-granule formation and integrity in adult germ cells. Promotes the accumulation of glh-1 mRNA and localization of pgl-1 to P-granules. Involved in RNA-mediated gene silencing (RNAi) in the germline. In particular, it is required for piwi-interacting RNA (piRNA) gene silencing and positively regulates the formation of secondary 22G-RNAs, which are RNA-dependent RNA polymerase-derived endo-siRNAs, typically 22 nucleotides in length with a 5'guanosine residue. Its role in RNAi may also be through positively regulating the expression of the dsRNA-binding protein rde-4. Plays a role in small RNA-directed transgenerational epigenetic inheritance. This is P-granule-associated protein deps-1 from Caenorhabditis elegans.